A 1388-amino-acid polypeptide reads, in one-letter code: Dicer-like protein 2 (1388 aa).

Residues 23-203 form the Helicase ATP-binding domain; it reads MLEASMKENI…LLMVESNLDA (181 aa). 36-43 provides a ligand contact to ATP; sequence MDTGSGKT. The DEAH box signature appears at 144 to 147; sequence DEAH. In terms of domain architecture, Helicase C-terminal spans 368–537; the sequence is KFESLLNFLD…DDERQLQSVS (170 aa). In terms of domain architecture, Dicer dsRNA-binding fold spans 564–658; it reads AMAHLHHFCA…LPLTKKPELK (95 aa). RNase III domains lie at 906–1059 and 1098–1281; these read ISAI…VDGG and NDRL…VDSG. Positions 1137, 1267, and 1270 each coordinate Mg(2+).

Belongs to the helicase family. Dicer subfamily. Mg(2+) serves as cofactor. Mn(2+) is required as a cofactor.

Dicer-like endonuclease involved in cleaving double-stranded RNA in the RNA interference (RNAi) pathway. Produces 21 to 25 bp dsRNAs (siRNAs) which target the selective destruction of homologous RNAs leading to sequence-specific suppression of gene expression, called post-transcriptional gene silencing (PTGS). Part of a broad host defense response against viral infection and transposons. The protein is Dicer-like protein 2 (dcl2) of Aspergillus fumigatus (strain ATCC MYA-4609 / CBS 101355 / FGSC A1100 / Af293) (Neosartorya fumigata).